Here is a 502-residue protein sequence, read N- to C-terminus: Glycerol kinase (502 aa).

An ADP-binding site is contributed by threonine 14. Residues threonine 14, threonine 15, and serine 16 each coordinate ATP. Threonine 14 provides a ligand contact to sn-glycerol 3-phosphate. Arginine 18 lines the ADP pocket. Sn-glycerol 3-phosphate is bound by residues arginine 84, glutamate 85, and tyrosine 136. Residues arginine 84, glutamate 85, and tyrosine 136 each contribute to the glycerol site. Phosphohistidine; by HPr is present on histidine 232. Residue aspartate 246 participates in sn-glycerol 3-phosphate binding. Glycerol contacts are provided by aspartate 246 and glutamine 247. Residues threonine 268 and glycine 311 each coordinate ADP. ATP-binding residues include threonine 268, glycine 311, glutamine 315, and glycine 412. Glycine 412 and asparagine 416 together coordinate ADP.

Belongs to the FGGY kinase family. Homotetramer and homodimer (in equilibrium). Post-translationally, the phosphoenolpyruvate-dependent sugar phosphotransferase system (PTS), including enzyme I, and histidine-containing protein (HPr) are required for the phosphorylation, which leads to the activation of the enzyme.

It carries out the reaction glycerol + ATP = sn-glycerol 3-phosphate + ADP + H(+). It functions in the pathway polyol metabolism; glycerol degradation via glycerol kinase pathway; sn-glycerol 3-phosphate from glycerol: step 1/1. With respect to regulation, activated by phosphorylation and inhibited by fructose 1,6-bisphosphate (FBP). Key enzyme in the regulation of glycerol uptake and metabolism. Catalyzes the phosphorylation of glycerol to yield sn-glycerol 3-phosphate. The polypeptide is Glycerol kinase (Streptococcus pneumoniae serotype 2 (strain D39 / NCTC 7466)).